The chain runs to 578 residues: Acyl-CoA ligase AKT1 (578 aa).

ATP is bound by residues 210–218 (SSGTSGAQK), 350–355 (QCYGAT), D438, R457, and K554. Positions 281-350 (DVEDLLSIVE…RHHPTWKTKQ (70 aa)) are SBD1. The SBD2 stretch occupies residues 351-413 (CYGATEAGTA…VSSPSLAIGY (63 aa)). Residues 576–578 (SKI) carry the Peroxisomal targeting signal type 1 motif.

Its subcellular location is the peroxisome. Its pathway is mycotoxin biosynthesis. In terms of biological role, acyl-CoA ligase; part of the gene clusters that mediate the biosynthesis of the host-selective toxins (HSTs) AK-toxins responsible for Japanese pear black spot disease by the Japanese pear pathotype. AK-toxins are esters of 9,10-epoxy 8-hydroxy 9-methyldecatrienoic acid (EDA). On cellular level, AK-toxins affect plasma membrane of susceptible cells and cause a sudden increase in loss of K(+) after a few minutes of toxin treatment. The acyl-CoA ligase AKT1, the hydrolase AKT2 and enoyl-CoA hydratase AKT3 are all involved in the biosynthesis of the AK-, AF- and ACT-toxin common 9,10-epoxy-8-hydroxy-9-methyl-decatrienoic acid (EDA) structural moiety. Part of the EDA biosynthesis occurs in the peroxisome since these 3 enzymes are localized in peroxisomes. The exact roles of the 3 enzymes, as well as of additional AK-toxin clusters enzymes, including AKT4, AKT6 and AKTS1, have still to be elucidated. The Cytochrome P450 monooxygenase AKT7 on the other side functions to limit production of EDA and AK-toxin, probably via the catalysis of a side reaction of EDA or its precursor. This is Acyl-CoA ligase AKT1 from Alternaria alternata (Alternaria rot fungus).